The following is a 228-amino-acid chain: MALQIGFLLFPQVQQLDLTGPYDVLASLPDVQVHLVWKDLVPVTSSTGLQLKPTTTFEDCPVLDVICVPGGAGVGPLMEDEQTLDFIRSQAAQARYVTSVCTGSLVLGAAGLLQGKRATTHWAYHDLLPTLGAIPVKDRVVRDGNLFTGGGITAGIDFALTLAQELVGVDTAQLVQLQLEYAPAPPFDSGSPDTAPSAVVDEARKRAAPSLKLRTEITERAAAKLNLR.

Residue Cys101 is part of the active site.

Homodimer.

The catalysed reaction is N-cyclohexylformamide = cyclohexyl isocyanide + H2O. Its activity is regulated as follows. Sensitive to thiol reagents and oxidizing reagents, but is not influenced by chelators or reducing reagents. In terms of biological role, catalyzes the hydration of cyclohexyl isocyanide to N-cyclohexylformamide. Acts on various isonitriles, but not on nitriles or amides. Probably involved in detoxification. This is Isonitrile hydratase (inhA) from Pseudomonas putida (Arthrobacter siderocapsulatus).